The following is a 436-amino-acid chain: Retinoic acid receptor RXR (436 aa).

The interval 1–108 (MDRSEGMDTL…GPSPSPGLPH (108 aa)) is disordered. The tract at residues 1-116 (MDRSEGMDTL…PHSSLHTKHI (116 aa)) is modulating. Over residues 13-22 (SMPSGMSMGM) the composition is skewed to low complexity. Composition is skewed to polar residues over residues 40–49 (SSLTSPTSTH) and 62–76 (MASS…QQMH). The segment covering 85–98 (SSMGSPPMLCLSPS) has biased composition (low complexity). NR C4-type zinc fingers lie at residues 117–137 (CAIC…CEGC) and 153–172 (CRDD…CQYC). Residues 117–182 (CAICGDRASG…RYMKCLSMGM (66 aa)) constitute a DNA-binding region (nuclear receptor). The interval 183–206 (KREAVQEERQRVKEKGDGEVESTS) is hinge. Over residues 189–200 (EERQRVKEKGDG) the composition is skewed to basic and acidic residues. The disordered stretch occupies residues 189–209 (EERQRVKEKGDGEVESTSGAN). Residues 209–432 (NNDMPVEQIL…TFLMEMLENP (224 aa)) form the NR LBD domain. Positions 290 and 301 each coordinate 9-cis-retinoate.

The protein belongs to the nuclear hormone receptor family. NR2 subfamily. In terms of assembly, homodimer (via ligand-binding domain). Heterodimer. Homotetramer consisting of 2 canonical homodimers. Within the tetramer, each monomer binds one molecule of 9C-RA and a NCOA1-derived peptide containing an L-X(2)-L-L motif.

It is found in the nucleus. Its function is as follows. Ligand-dependent transcription factor probably involved in the retinoic acid response pathway. Binds 9-cis-retinoic acid (9C-RA) and, to a lesser extent, docosahexaenoic acid (DHA), phytanic acid, methoprene acid and oleic acid. Binds to double-stranded DNA sequences containing direct repeats (DR) with the consensus sequence 5'-[AG]GGTCA-3' and 1, 2, 3, 4 or 5 nucleotides in between (DR1, DR2, DR3. DR4 and DR5, respectively). Binding to DR1 is strongest. Transactivates gene expression when 9C-RA or DHA is bound. In Biomphalaria glabrata (Bloodfluke planorb), this protein is Retinoic acid receptor RXR.